Reading from the N-terminus, the 392-residue chain is Rhizopuspepsin-5 (392 aa).

The N-terminal stretch at 1–21 (MKFSLISSCVALAVLVLSTEA) is a signal peptide. Residues 22–69 (APNGKKVNIPLTKNKDYKPNAKNAIQKVLAKYHRHRSTSSSSNSTSTD) constitute a propeptide, activation peptide. The Peptidase A1 domain maps to 85–389 (YFGQVKVGTP…NPTVPQVQIA (305 aa)). Asp-103 is a catalytic residue. Cys-116 and Cys-119 are joined by a disulfide. The active site involves Asp-286. Cysteines 320 and 353 form a disulfide.

The protein belongs to the peptidase A1 family.

It catalyses the reaction Hydrolysis of proteins with broad specificity similar to that of pepsin A, preferring hydrophobic residues at P1 and P1'. Clots milk and activates trypsinogen. Does not cleave 4-Gln-|-His-5, but does cleave 10-His-|-Leu-11 and 12-Val-|-Glu-13 in B chain of insulin.. The sequence is that of Rhizopuspepsin-5 from Rhizopus niveus.